A 108-amino-acid chain; its full sequence is Nucleoid-associated protein Csal_1459 (108 aa).

The span at 84 to 93 (EETSRGRMEE) shows a compositional bias: basic and acidic residues. A disordered region spans residues 84 to 108 (EETSRGRMEEATEGMNLPPGFKMPF).

Belongs to the YbaB/EbfC family. In terms of assembly, homodimer.

Its subcellular location is the cytoplasm. It localises to the nucleoid. Binds to DNA and alters its conformation. May be involved in regulation of gene expression, nucleoid organization and DNA protection. The protein is Nucleoid-associated protein Csal_1459 of Chromohalobacter salexigens (strain ATCC BAA-138 / DSM 3043 / CIP 106854 / NCIMB 13768 / 1H11).